A 582-amino-acid chain; its full sequence is Inactive metallocarboxypeptidase ECM14 (582 aa).

An N-terminal signal peptide occupies residues 1-20 (MHILQVITGATLVSVPFVSA). Positions 21-172 (IPSSTSEFLP…QAVYESYPQP (152 aa)) are excised as a propeptide. Residues 200 to 522 (DYQPLSVIIP…NAVLVFGQFL (323 aa)) enclose the Peptidase M14 domain. Zn(2+) contacts are provided by His265 and Glu268. Substrate-binding positions include 265-268 (HARE), Arg323, and 340-341 (DR). Cys334 and Cys357 form a disulfide bridge. N-linked (GlcNAc...) asparagine glycans are attached at residues Asn381 and Asn387. His397 contributes to the Zn(2+) binding site. A substrate-binding site is contributed by 398-399 (SY). The segment covering 561–571 (SNQLEDDDNEN) has biased composition (acidic residues). Positions 561–582 (SNQLEDDDNENDTLLGFRTQKV) are disordered. Asn571 is a glycosylation site (N-linked (GlcNAc...) asparagine).

Belongs to the peptidase M14 family. Requires Zn(2+) as cofactor.

It is found in the vacuole. The protein localises to the secreted. Inactive carboxypeptidase that may play a role in cell wall organization and biogenesis. In Coccidioides posadasii (strain C735) (Valley fever fungus), this protein is Inactive metallocarboxypeptidase ECM14 (ECM14).